Consider the following 523-residue polypeptide: 2-isopropylmalate synthase (523 aa).

The region spanning 5–267 (VIIFDTTLRD…HTAINHQEIW (263 aa)) is the Pyruvate carboxyltransferase domain. The Mn(2+) site is built by aspartate 14, histidine 202, histidine 204, and asparagine 238. The regulatory domain stretch occupies residues 392 to 523 (RLDYFSVQSG…QHNENNKETV (132 aa)).

The protein belongs to the alpha-IPM synthase/homocitrate synthase family. LeuA type 1 subfamily. In terms of assembly, homodimer. It depends on Mn(2+) as a cofactor.

Its subcellular location is the cytoplasm. It carries out the reaction 3-methyl-2-oxobutanoate + acetyl-CoA + H2O = (2S)-2-isopropylmalate + CoA + H(+). The protein operates within amino-acid biosynthesis; L-leucine biosynthesis; L-leucine from 3-methyl-2-oxobutanoate: step 1/4. Functionally, catalyzes the condensation of the acetyl group of acetyl-CoA with 3-methyl-2-oxobutanoate (2-ketoisovalerate) to form 3-carboxy-3-hydroxy-4-methylpentanoate (2-isopropylmalate). This chain is 2-isopropylmalate synthase, found in Escherichia coli O45:K1 (strain S88 / ExPEC).